The following is a 427-amino-acid chain: 3-phosphoshikimate 1-carboxyvinyltransferase (427 aa).

3-phosphoshikimate contacts are provided by Lys-20, Ser-21, and Arg-25. Lys-20 contacts phosphoenolpyruvate. Gly-92 and Arg-120 together coordinate phosphoenolpyruvate. 4 residues coordinate 3-phosphoshikimate: Ser-166, Gln-168, Asp-312, and Lys-339. Gln-168 provides a ligand contact to phosphoenolpyruvate. The active-site Proton acceptor is the Asp-312. Phosphoenolpyruvate is bound by residues Arg-343 and Arg-385.

It belongs to the EPSP synthase family. In terms of assembly, monomer.

The protein localises to the cytoplasm. It catalyses the reaction 3-phosphoshikimate + phosphoenolpyruvate = 5-O-(1-carboxyvinyl)-3-phosphoshikimate + phosphate. It functions in the pathway metabolic intermediate biosynthesis; chorismate biosynthesis; chorismate from D-erythrose 4-phosphate and phosphoenolpyruvate: step 6/7. In terms of biological role, catalyzes the transfer of the enolpyruvyl moiety of phosphoenolpyruvate (PEP) to the 5-hydroxyl of shikimate-3-phosphate (S3P) to produce enolpyruvyl shikimate-3-phosphate and inorganic phosphate. The polypeptide is 3-phosphoshikimate 1-carboxyvinyltransferase (Streptococcus pneumoniae (strain 70585)).